A 448-amino-acid chain; its full sequence is Trigger factor (448 aa).

The region spanning 167 to 253 (GSIVRVDFVE…VKDIKRRDIP (87 aa)) is the PPIase FKBP-type domain.

It belongs to the FKBP-type PPIase family. Tig subfamily.

The protein resides in the cytoplasm. The catalysed reaction is [protein]-peptidylproline (omega=180) = [protein]-peptidylproline (omega=0). Involved in protein export. Acts as a chaperone by maintaining the newly synthesized protein in an open conformation. Functions as a peptidyl-prolyl cis-trans isomerase. This Borrelia duttonii (strain Ly) protein is Trigger factor.